The primary structure comprises 408 residues: Putative FBD-associated F-box protein At5g50270 (408 aa).

Residues 1–54 (MDRISGLPDELLLRVLSLLPNVKDVVVTMVLSKRWQFLWMMVPKLVYDDSYQNL) enclose the F-box domain. The region spanning 345–408 (PLRDDLSSVP…VNPDKKYEMI (64 aa)) is the FBD domain.

The sequence is that of Putative FBD-associated F-box protein At5g50270 from Arabidopsis thaliana (Mouse-ear cress).